Consider the following 423-residue polypeptide: NADP-specific glutamate dehydrogenase (423 aa).

The active site involves Lys-112.

It belongs to the Glu/Leu/Phe/Val dehydrogenases family. Homohexamer.

The enzyme catalyses L-glutamate + NADP(+) + H2O = 2-oxoglutarate + NH4(+) + NADPH + H(+). The polypeptide is NADP-specific glutamate dehydrogenase (gdhA) (Saccharolobus shibatae (strain ATCC 51178 / DSM 5389 / JCM 8931 / NBRC 15437 / B12) (Sulfolobus shibatae)).